The primary structure comprises 255 residues: Hydroxyacylglutathione hydrolase (255 aa).

Zn(2+)-binding residues include H56, H58, D60, H61, H114, D133, and H171.

This sequence belongs to the metallo-beta-lactamase superfamily. Glyoxalase II family. Monomer. It depends on Zn(2+) as a cofactor.

It catalyses the reaction an S-(2-hydroxyacyl)glutathione + H2O = a 2-hydroxy carboxylate + glutathione + H(+). It participates in secondary metabolite metabolism; methylglyoxal degradation; (R)-lactate from methylglyoxal: step 2/2. Thiolesterase that catalyzes the hydrolysis of S-D-lactoyl-glutathione to form glutathione and D-lactic acid. This Cereibacter sphaeroides (strain ATCC 17029 / ATH 2.4.9) (Rhodobacter sphaeroides) protein is Hydroxyacylglutathione hydrolase.